The primary structure comprises 122 residues: NADPH-dependent 7-cyano-7-deazaguanine reductase (122 aa).

The active-site Thioimide intermediate is Cys34. Catalysis depends on Asp41, which acts as the Proton donor. Substrate contacts are provided by residues 56–58 (VEL) and 75–76 (HE).

It belongs to the GTP cyclohydrolase I family. QueF type 1 subfamily.

It localises to the cytoplasm. It carries out the reaction 7-aminomethyl-7-carbaguanine + 2 NADP(+) = 7-cyano-7-deazaguanine + 2 NADPH + 3 H(+). It functions in the pathway tRNA modification; tRNA-queuosine biosynthesis. Functionally, catalyzes the NADPH-dependent reduction of 7-cyano-7-deazaguanine (preQ0) to 7-aminomethyl-7-deazaguanine (preQ1). This Anaeromyxobacter dehalogenans (strain 2CP-C) protein is NADPH-dependent 7-cyano-7-deazaguanine reductase.